Reading from the N-terminus, the 322-residue chain is ATP-dependent 6-phosphofructokinase (322 aa).

Position 11 (glycine 11) interacts with ATP. 21 to 25 (RAVVR) serves as a coordination point for ADP. Residues 72–73 (RC) and 102–105 (GDGS) each bind ATP. Aspartate 103 contacts Mg(2+). 127–129 (TID) contributes to the substrate binding site. Aspartate 129 functions as the Proton acceptor in the catalytic mechanism. ADP is bound at residue arginine 156. Substrate-binding positions include arginine 164 and 171–173 (MGR). ADP-binding positions include 187–189 (GAE), arginine 213, and 215–217 (KKH). Residues glutamate 224, arginine 245, and 251 to 254 (HIQR) each bind substrate.

It belongs to the phosphofructokinase type A (PFKA) family. ATP-dependent PFK group I subfamily. Prokaryotic clade 'B1' sub-subfamily. In terms of assembly, homotetramer. Requires Mg(2+) as cofactor.

It is found in the cytoplasm. The enzyme catalyses beta-D-fructose 6-phosphate + ATP = beta-D-fructose 1,6-bisphosphate + ADP + H(+). Its pathway is carbohydrate degradation; glycolysis; D-glyceraldehyde 3-phosphate and glycerone phosphate from D-glucose: step 3/4. Its activity is regulated as follows. Allosterically activated by ADP and other diphosphonucleosides, and allosterically inhibited by phosphoenolpyruvate. Catalyzes the phosphorylation of D-fructose 6-phosphate to fructose 1,6-bisphosphate by ATP, the first committing step of glycolysis. The protein is ATP-dependent 6-phosphofructokinase of Staphylococcus carnosus (strain TM300).